We begin with the raw amino-acid sequence, 499 residues long: Cytochrome P450 monooxygenase ausI (499 aa).

A helical membrane pass occupies residues 10–30; the sequence is PLGQPLIAGFVVVSAVLYLLY. Cys-439 serves as a coordination point for heme. Asn-483 is a glycosylation site (N-linked (GlcNAc...) asparagine).

Belongs to the cytochrome P450 family. It depends on heme as a cofactor.

It is found in the membrane. The protein operates within secondary metabolite biosynthesis; terpenoid biosynthesis. Functionally, cytochrome P450 monooxygenase; part of the gene cluster B that mediates the biosynthesis of austinol and dehydroaustinol, two fungal meroterpenoids. The first step of the pathway is the synthesis of 3,5-dimethylorsellinic acid by the polyketide synthase ausA. 3,5-dimethylorsellinic acid is then prenylated by the polyprenyl transferase ausN. Further epoxidation by the FAD-dependent monooxygenase ausM and cyclization by the probable terpene cyclase ausL lead to the formation of protoaustinoid A. Protoaustinoid A is then oxidized to spiro-lactone preaustinoid A3 by the combined action of the FAD-binding monooxygenases ausB and ausC, and the dioxygenase ausE. Acid-catalyzed keto-rearrangement and ring contraction of the tetraketide portion of preaustinoid A3 by ausJ lead to the formation of preaustinoid A4. The aldo-keto reductase ausK, with the help of ausH, is involved in the next step by transforming preaustinoid A4 into isoaustinone which is in turn hydroxylated by the P450 monooxygenase ausI to form austinolide. Finally, the cytochrome P450 monooxygenase ausG modifies austinolide to austinol. Austinol can be further modified to dehydroaustinol which forms a diffusible complex with diorcinol that initiates conidiation. Due to genetic rearrangements of the clusters and the subsequent loss of some enzymes, the end products of the Emericella nidulans austinoid biosynthesis clusters are austinol and dehydroaustinol, even if additional enzymes, such as the O-acetyltransferase ausQ and the cytochrome P450 monooxygenase ausR are still functional. The polypeptide is Cytochrome P450 monooxygenase ausI (Emericella nidulans (strain FGSC A4 / ATCC 38163 / CBS 112.46 / NRRL 194 / M139) (Aspergillus nidulans)).